Here is a 774-residue protein sequence, read N- to C-terminus: MRLSKVSDIKSTGVSNYKNFNSKNSSKYSLMEVSKKNEKKNSLGAFHSKKILLIFGIIYVVLLNAYICGDKYEKAVDYGFRESRILAEGEDTCARKEKTTLRKSKQKTSTRTVATQTKKDEENKSVVTEEQKVESDSEKQKRTKKVVKKQINIGDTENQKEGKNVKKVIKKEKKKEESGKPEENKHANEASKKKEPKASKVSQKPSTSTRSNNEVKIRAASNQETLTSADPEGQIMREYAADPEYRKHLEIFYKILTNTDPNDEVERRNADNKEDLTSADPEGQIMREYASDPEYRKHLEIFYKILTNTDPNDDVERRNADNKEDLTSADPEGQIMREYAADPEYRKHLEVFHKILTNTDPNDEVERRNADNKEDLTSADPEGQIMREYAADPEYRKHLEIFHKILTNTDPNDEVERRNADNKEDLTSADPEGQIMREYAADPEYRKHLEVFHKILTNTDPNDEVERRNADNKELTSSDPEGQIMREYAADPEYRKHLEIFHKILTNTDPNDEVERRNADNKEDLTSADPEGQIMREYAADPEYRKHLEIFYKILTNTDPNDEVERRNADNKEELTSSDPEGQIMREYAADPEYRKHLEIFHKILTNTDPNDEVERRNADNKEDLTSADPEGQIMREYAADPEYRKHLEIFYKILTNTDPNDEVERRNADNKEDLTSADPEGQIMREYASDPEYRKHLEIFYKILTNTDPNDDVERRNADNKEDLTSADPEGQIMREYAADPEYRKHLEIFHKILTNTDPNDEVERQNADNNEA.

The short motif at 84 to 88 (RILAE) is the PEXEL motif element. 10 disordered regions span residues 97–243 (EKTT…AADP), 256–291 (LTNT…EYAS), 310–334 (DPND…PEGQ), 358–383 (NTDP…DPEG), 410–434 (DPND…PEGQ), 458–481 (NTDP…SDPE), 509–533 (DPND…PEGQ), 609–632 (DPND…DPEG), 661–682 (NDEV…DPEG), and 709–734 (DPND…EGQI). Composition is skewed to basic and acidic residues over residues 117–140 (TKKD…SEKQ) and 174–198 (KKEE…EPKA). Residues 201–228 (VSQKPSTSTRSNNEVKIRAASNQETLTS) are compositionally biased toward polar residues. GBP repeat units follow at residues 226 to 275 (LTSA…NKED), 276 to 325 (LTSA…NKED), 326 to 375 (LTSA…NKED), 376 to 425 (LTSA…NKED), 426 to 474 (LTSA…DNKE), 475 to 524 (LTSS…NKED), 525 to 574 (LTSA…NKEE), 575 to 624 (LTSS…NKED), 625 to 674 (LTSA…NKED), 675 to 724 (LTSA…NKED), and 725 to 774 (LTSA…NNEA). Basic and acidic residues-rich tracts occupy residues 264–276 (EVER…KEDL), 314–326 (DVER…KEDL), 364–376 (EVER…KEDL), 414–426 (EVER…KEDL), 464–476 (EVER…KELT), 513–525 (EVER…KEDL), 613–625 (EVER…KEDL), 663–675 (EVER…KEDL), and 713–725 (DVER…KEDL).

As to quaternary structure, interacts with host glycophorin.

The protein localises to the secreted. The protein resides in the cell surface. It localises to the host cytoplasm. Functionally, involved in merozoite invasion of host erythrocytes. The chain is Glycophorin-binding protein 130 from Plasmodium falciparum (isolate FCR-3 / Gambia).